We begin with the raw amino-acid sequence, 320 residues long: Phosphate acyltransferase (320 aa).

This sequence belongs to the PlsX family. As to quaternary structure, homodimer. Probably interacts with PlsY.

It localises to the cytoplasm. It catalyses the reaction a fatty acyl-[ACP] + phosphate = an acyl phosphate + holo-[ACP]. The protein operates within lipid metabolism; phospholipid metabolism. Catalyzes the reversible formation of acyl-phosphate (acyl-PO(4)) from acyl-[acyl-carrier-protein] (acyl-ACP). This enzyme utilizes acyl-ACP as fatty acyl donor, but not acyl-CoA. This chain is Phosphate acyltransferase, found in Chlamydia pneumoniae (Chlamydophila pneumoniae).